The chain runs to 338 residues: Ferredoxin--NADP reductase (338 aa).

FAD contacts are provided by aspartate 35, glutamine 43, tyrosine 48, alanine 88, phenylalanine 122, aspartate 289, and threonine 330.

Belongs to the ferredoxin--NADP reductase type 2 family. As to quaternary structure, homodimer. Requires FAD as cofactor.

It carries out the reaction 2 reduced [2Fe-2S]-[ferredoxin] + NADP(+) + H(+) = 2 oxidized [2Fe-2S]-[ferredoxin] + NADPH. This Ehrlichia canis (strain Jake) protein is Ferredoxin--NADP reductase.